Reading from the N-terminus, the 147-residue chain is UPF0306 protein YhbP (147 aa).

It belongs to the UPF0306 family.

This Escherichia coli (strain SMS-3-5 / SECEC) protein is UPF0306 protein YhbP.